An 821-amino-acid polypeptide reads, in one-letter code: DNA ligase (821 aa).

NAD(+)-binding positions include 33 to 37, 82 to 83, and glutamate 113; these read DVDYD and SL. The N6-AMP-lysine intermediate role is filled by lysine 115. Residues arginine 136, glutamate 173, lysine 290, and lysine 314 each contribute to the NAD(+) site. Zn(2+) contacts are provided by cysteine 408, cysteine 411, cysteine 426, and cysteine 432. Positions 741 to 821 constitute a BRCT domain; that stretch reads IVAGPLDGQT…RLLAYLAEHE (81 aa).

It belongs to the NAD-dependent DNA ligase family. LigA subfamily. Mg(2+) is required as a cofactor. Mn(2+) serves as cofactor.

The enzyme catalyses NAD(+) + (deoxyribonucleotide)n-3'-hydroxyl + 5'-phospho-(deoxyribonucleotide)m = (deoxyribonucleotide)n+m + AMP + beta-nicotinamide D-nucleotide.. In terms of biological role, DNA ligase that catalyzes the formation of phosphodiester linkages between 5'-phosphoryl and 3'-hydroxyl groups in double-stranded DNA using NAD as a coenzyme and as the energy source for the reaction. It is essential for DNA replication and repair of damaged DNA. The chain is DNA ligase from Stenotrophomonas maltophilia (strain R551-3).